Consider the following 370-residue polypeptide: Ubiquitin carboxyl-terminal hydrolase 12 (370 aa).

Residues 1–4 (MEIL) carry the Required for plasma membrane localization of USP12/WDR20 motif. A USP domain is found at 39–369 (FGLVNFGNTC…SGYILFYQSR (331 aa)). The Nucleophile role is filled by Cys-48. The interval 145–169 (KQEKQNGRLPNGNIDNENNNSTPDP) is disordered. Positions 157–168 (NIDNENNNSTPD) are enriched in polar residues. Cys-186, Cys-189, Cys-233, and Cys-236 together coordinate Zn(2+). His-317 serves as the catalytic Proton acceptor.

The protein belongs to the peptidase C19 family. USP12/USP46 subfamily. As to quaternary structure, interacts with WDR48. Interacts with WDR20; this interaction promotes translocation of the USP12 complex to the plasma membrane. Component of the USP12-WDR20-WDR48 deubiquitinating complex. Component of the USP12-DMWD-WDR48 deubiquitinating complex. Interacts with PHLPP1. Interacts with RBPJ. Interacts with CBP; this interaction blocks the acetyltransferase activity of CREBBP. Interacts with ITCH; the interaction is more efficient when both USP12 and WDR48/UAF1 are involved and may mediate recruitment of the USP12 deubiquitinating complex to Notch. Interacts with OPTN and SQSTM1/p62; the interaction is independent of deubiquitinase activity and may be involved in regulation of autophagic flux. In terms of assembly, (Microbial infection) Interacts with Epstein-Barr virus protein EBNA3.

The protein localises to the nucleus. It localises to the cytoplasm. The protein resides in the cell membrane. It carries out the reaction Thiol-dependent hydrolysis of ester, thioester, amide, peptide and isopeptide bonds formed by the C-terminal Gly of ubiquitin (a 76-residue protein attached to proteins as an intracellular targeting signal).. Activated by interaction with WDR20, WDR48 and DMWD through different allosteric mechanisms. Deubiquitinating enzyme that plays various roles in the regulation of the immune response and inflammation. During TCR engagement and activation, translocates into the cytoplasm and deubiquitinates its substrates LAT and TRAT1 and prevents their lysosome-dependent degradation to stabilize the TCR signaling complex at the plasma membrane. Plays an essential role in the selective LPS-induced macrophage response through the activation of NF-kappa-B pathway. In addition, promotes that antiviral immune response through targeting DNA sensor IFI16 to inhibit its proteasome-dependent degradation. Participates in the interferon signaling pathway and antiviral response independently of its deubiquitinase activity by maintaining nuclear phosphorylated STAT1 levels via inhibition of its CREBBP-mediated acetylation and subsequent dephosphorylation. Plays an intrinsic role in promoting the differentiation, activation and proliferation of CD4(+) T-cell by activating the NF-kappa-B signaling pathway through deubiquitinating and stabilizing B-cell lymphoma/leukemia 10/BCL10. In myeloid-derived suppressor cells promotes the activation of the NF-kappa-B via deubiquitination and stabilization of RELA. Regulates the 'Lys-63'-linked polyubiquitin chains of BAX and thereby modulates the mitochondrial apoptotic process. Negative regulator of NOTCH signaling that specifically deubiquitinates non-activated NOTCH receptors to target them for lysosomal degradation; deubiquitination of NOTCH stimulates its transport form late endosomes to lysosomes. Protects neurons against HTT/huntingtin-induced polyglutamine expansion-dependent neurodegeneration through regulation of autophagic flux. This function is independent of deubiquitinase activity or of other components of the USP12-WDR20-WDR48 deubiquitinating complex. In complex with WDR48, acts as a potential tumor suppressor by positively regulating PHLPP1 stability. In terms of biological role, (Microbial infection) Forms a complex with Epstein-Barr virus protein EBNA3 which is an active deubiquitinase activity that may select specific substrates to promote B-lymphocyte transformation. In Homo sapiens (Human), this protein is Ubiquitin carboxyl-terminal hydrolase 12 (USP12).